A 182-amino-acid chain; its full sequence is ATP synthase subunit delta (182 aa).

Belongs to the ATPase delta chain family. F-type ATPases have 2 components, F(1) - the catalytic core - and F(0) - the membrane proton channel. F(1) has five subunits: alpha(3), beta(3), gamma(1), delta(1), epsilon(1). F(0) has three main subunits: a(1), b(2) and c(10-14). The alpha and beta chains form an alternating ring which encloses part of the gamma chain. F(1) is attached to F(0) by a central stalk formed by the gamma and epsilon chains, while a peripheral stalk is formed by the delta and b chains.

Its subcellular location is the cell inner membrane. Functionally, f(1)F(0) ATP synthase produces ATP from ADP in the presence of a proton or sodium gradient. F-type ATPases consist of two structural domains, F(1) containing the extramembraneous catalytic core and F(0) containing the membrane proton channel, linked together by a central stalk and a peripheral stalk. During catalysis, ATP synthesis in the catalytic domain of F(1) is coupled via a rotary mechanism of the central stalk subunits to proton translocation. This protein is part of the stalk that links CF(0) to CF(1). It either transmits conformational changes from CF(0) to CF(1) or is implicated in proton conduction. This Cytophaga hutchinsonii (strain ATCC 33406 / DSM 1761 / CIP 103989 / NBRC 15051 / NCIMB 9469 / D465) protein is ATP synthase subunit delta.